Reading from the N-terminus, the 253-residue chain is Indole-3-glycerol phosphate synthase (253 aa).

This sequence belongs to the TrpC family.

The catalysed reaction is 1-(2-carboxyphenylamino)-1-deoxy-D-ribulose 5-phosphate + H(+) = (1S,2R)-1-C-(indol-3-yl)glycerol 3-phosphate + CO2 + H2O. Its pathway is amino-acid biosynthesis; L-tryptophan biosynthesis; L-tryptophan from chorismate: step 4/5. The sequence is that of Indole-3-glycerol phosphate synthase from Bacillus thuringiensis (strain Al Hakam).